The sequence spans 603 residues: MEAARMGFRAKTLPHLGNGTRLPLKTKLSLFPMHLLQNHTTLSRRSTKLNLCVKACSKTSGVESSRPLPHSAPDLWGDHILSVPTENSEFDTLETEIESIKPKVRNMLMSSHKTDKERICLIHLLICLGTFHYFEKEIEEILEQAFRKLDMLFTDEDDLETTAIMFEVFRLYGHKISCDVFDRFKGVDAKFKEHLVSDVRGMLQLYEAAHLATPFETILDEALSFTRYHLESLAGQQATAPHISRHILNALYKPRFLKMEIIAAREYIHFYQKEGHDETLLKFAKLNFNFCQLHYVRELKTLTKWWKDIDLPYKLPYIRDRLLETFIGVMAVYLEPHYSLGRIIATKVSQVIVVMDDTCDAYGTFSEVRSLIDSLERWDPGAIDKLPSCLRIVIQSIVETMEDIEREMKPRGRSSSVQDTVEEIKIMGRAYAEISKWARAGHVPTFDDYIELGLDSSGIRCFAMYSFISMEDCEENQTNAWFKSKPKMLRALSVIFRLTNDIAGFEEEMRRGEVVNGVNCYVKQHNVTKELAVREIKKMIRDNYKIMMEEFLTIKSVSRPILVRCFNIVRLVNLYYEEGDNFTNPNGKLKDLITSLFFHPLPL.

Positions 356, 360, 500, and 508 each coordinate Mg(2+). The DDXXD motif signature appears at 356 to 360 (DDTCD).

It belongs to the terpene synthase family. Tpsa subfamily. Mg(2+) serves as cofactor. Requires Mn(2+) as cofactor. Predominantly expressed in siliques but also in flowers.

Its subcellular location is the cytoplasm. The protein operates within secondary metabolite biosynthesis; terpenoid biosynthesis. Involved in terpene biosynthesis in roots. Possesses sesquiterpene (C15) synthase activity in vitro. Does not seem to be involved in diterpene (C20) biosynthesis. The sequence is that of Terpenoid synthase 22 from Arabidopsis thaliana (Mouse-ear cress).